We begin with the raw amino-acid sequence, 243 residues long: Pyridoxine 5'-phosphate synthase (243 aa).

Residue N9 participates in 3-amino-2-oxopropyl phosphate binding. 1-deoxy-D-xylulose 5-phosphate is bound at residue 11 to 12 (DH). R20 is a 3-amino-2-oxopropyl phosphate binding site. The active-site Proton acceptor is the H45. 1-deoxy-D-xylulose 5-phosphate contacts are provided by R47 and H52. E72 functions as the Proton acceptor in the catalytic mechanism. T102 serves as a coordination point for 1-deoxy-D-xylulose 5-phosphate. The active-site Proton donor is the H193. Residues G194 and 215–216 (GH) contribute to the 3-amino-2-oxopropyl phosphate site.

The protein belongs to the PNP synthase family. In terms of assembly, homooctamer; tetramer of dimers.

Its subcellular location is the cytoplasm. The enzyme catalyses 3-amino-2-oxopropyl phosphate + 1-deoxy-D-xylulose 5-phosphate = pyridoxine 5'-phosphate + phosphate + 2 H2O + H(+). It functions in the pathway cofactor biosynthesis; pyridoxine 5'-phosphate biosynthesis; pyridoxine 5'-phosphate from D-erythrose 4-phosphate: step 5/5. Catalyzes the complicated ring closure reaction between the two acyclic compounds 1-deoxy-D-xylulose-5-phosphate (DXP) and 3-amino-2-oxopropyl phosphate (1-amino-acetone-3-phosphate or AAP) to form pyridoxine 5'-phosphate (PNP) and inorganic phosphate. The chain is Pyridoxine 5'-phosphate synthase from Shigella boydii serotype 4 (strain Sb227).